A 95-amino-acid chain; its full sequence is Large ribosomal subunit protein eL31 (95 aa).

Belongs to the eukaryotic ribosomal protein eL31 family. Part of the 50S ribosomal subunit.

This is Large ribosomal subunit protein eL31 from Pyrococcus furiosus (strain ATCC 43587 / DSM 3638 / JCM 8422 / Vc1).